The primary structure comprises 263 residues: LIM and SH3 domain protein 1 (263 aa).

Met-1 carries the N-acetylmethionine modification. Residues Pro-3–Thr-63 enclose the LIM zinc-binding domain. An N6-acetyllysine modification is found at Lys-42. Nebulin repeat units lie at residues Met-64–Gly-95 and Gly-97–Met-131. Phosphothreonine is present on Thr-68. Lys-75 is subject to N6-methyllysine. Phosphoserine is present on Ser-99. Thr-104 bears the Phosphothreonine mark. N6-succinyllysine is present on Lys-112. Residues Ser-118 and Ser-134 each carry the phosphoserine modification. A disordered region spans residues Tyr-122 to Lys-207. Residues Asp-148–Gln-162 are compositionally biased toward polar residues. The SH3 domain occupies Gly-204–Ile-263.

As to quaternary structure, interacts with F-actin. Interacts with ANKRD54. Interacts with KBTBD10. In terms of processing, phosphorylated. In terms of tissue distribution, expressed in a wide range of tissues (but not the heart or skeletal muscle), the expression is specific for certain actin-rich cell types within these tissues. Expression is prominent in the cortical regions of ion-transporting duct cells in the pancreas, in the salivary parotid gland and in certain F-actin-rich cells in the distal tubule/collecting duct. In primary cultures of gastric fibroblasts, expression is mainly within the tips of lamellipodia and at the leading edges of membrane ruffles.

The protein resides in the cytoplasm. It localises to the cell cortex. Its subcellular location is the cytoskeleton. Its function is as follows. Plays an important role in the regulation of dynamic actin-based, cytoskeletal activities. Agonist-dependent changes in LASP1 phosphorylation may also serve to regulate actin-associated ion transport activities, not only in the parietal cell but also in certain other F-actin-rich secretory epithelial cell types. The chain is LIM and SH3 domain protein 1 from Rattus norvegicus (Rat).